Consider the following 416-residue polypeptide: Protein LAZY 1 (416 aa).

The helical transmembrane segment at F63 to I83 threads the bilayer. An IGT motif motif is present at residues G69–T75. Disordered regions lie at residues A266–A306 and K337–L361. The span at G270 to Y282 shows a compositional bias: gly residues. A Nuclear localization signal motif is present at residues K278 to G295.

It belongs to the LAZY family. Expressed specifically in the cells at the inner side of the vascular bundles of young leaf sheaths and peripheral cylinders of vascular bundles in the unelongated stems. Expressed in the leaf sheath pulvinus and the lamina joint.

It localises to the cell membrane. It is found in the nucleus. Functionally, involved in the regulation of shoot gravitropism and tiller angle through negative regulation of basipetal polar auxin transport (PAT). Acts as positive regulator of lateral auxin transport. Promotes vertical shoot growth. LAZY1 and TAC1 play opposite functions in the regulation of tiller growth angle. The chain is Protein LAZY 1 from Oryza sativa subsp. japonica (Rice).